A 337-amino-acid polypeptide reads, in one-letter code: Palmitoyltransferase ZDHHC15 (337 aa).

Over 1–20 the chain is Cytoplasmic; sequence MRRGWKMALSGGLRCCRRVL. Residues 21 to 41 form a helical membrane-spanning segment; it reads SWVPVLVIVLVVLWSYYAYVF. Topologically, residues 42–56 are lumenal; it reads ELCLVTVLSPAEKVI. A helical transmembrane segment spans residues 57 to 77; the sequence is YLILYHAIFVFFTWTYWKSIF. Residues 78-172 lie on the Cytoplasmic side of the membrane; the sequence is TLPQQPNQKF…NNCIGFSNYK (95 aa). The region spanning 129–179 is the DHHC domain; that stretch reads RFCDRCHLIKPDRCHHCSVCAMCVLKMDHHCPWVNNCIGFSNYKFFLQFLA. Positions 131, 134, 144, 145, 148, 151, and 158 each coordinate Zn(2+). The active-site S-palmitoyl cysteine intermediate is the Cys-159. Cys-165 provides a ligand contact to Zn(2+). The chain crosses the membrane as a helical span at residues 173-193; it reads FFLQFLAYSVLYCLYIATTVF. Topologically, residues 194 to 210 are lumenal; it reads SYFIKYWRGELPSVRSK. A helical membrane pass occupies residues 211-234; sequence FHVLFLLFVACMFFVSLVILFGYH. Residues 235–337 are Cytoplasmic-facing; sequence CWLVSRNKTT…SSSLAVETET (103 aa). Positions 306 to 337 are disordered; sequence PLLANEETWEDNEDDNQDYPEGSSSLAVETET. Over residues 312-323 the composition is skewed to acidic residues; the sequence is ETWEDNEDDNQD. Polar residues predominate over residues 327 to 337; sequence GSSSLAVETET.

Belongs to the DHHC palmitoyltransferase family. Post-translationally, autopalmitoylated (in vitro). In terms of tissue distribution, expressed in placenta, liver, lung, kidney, heart and brain.

It localises to the golgi apparatus membrane. The protein localises to the postsynaptic density. It catalyses the reaction L-cysteinyl-[protein] + hexadecanoyl-CoA = S-hexadecanoyl-L-cysteinyl-[protein] + CoA. It carries out the reaction L-cysteinyl-[protein] + tetradecanoyl-CoA = S-tetradecanoyl-L-cysteinyl-[protein] + CoA. The enzyme catalyses L-cysteinyl-[protein] + octadecanoyl-CoA = S-octadecanoyl-L-cysteinyl-[protein] + CoA. Its function is as follows. Palmitoyltransferase that catalyzes the addition of palmitate onto various protein substrates. Has no stringent fatty acid selectivity and in addition to palmitate can also transfer onto target proteins myristate from tetradecanoyl-CoA and stearate from octadecanoyl-CoA. Palmitoylates IGF2R and SORT1, promoting their partitioning to an endosomal membrane subdomain where they can interact with the retromer cargo-selective complex. Thereby, regulates retrograde transport from endosomes to the Golgi apparatus of these lysosomal sorting receptors and plays a role in trafficking of lysosomal proteins. In the nervous system, catalyzes the palmitoylation of DLG4/PSD95 and regulates its synaptic clustering and function in synaptogenesis. Could be involved in the differentiation of dopaminergic neurons and the development of the diencephalon. Could also catalyze the palmitoylation of GAP43. Could also palmitoylate DNAJC5 and regulate its localization to the Golgi membrane. Could also palmitoylate FYN as shown in vitro. May palmitoylate CALHM3 subunit of gustatory voltage-gated ion channels and modulate channel gating and kinetics. In Homo sapiens (Human), this protein is Palmitoyltransferase ZDHHC15.